Consider the following 316-residue polypeptide: PAK4-inhibitor inka2 (316 aa).

Disordered stretches follow at residues 43 to 74 (RSSPPPSPDIEKPCVVPPRRAPRRDNRISHRT) and 108 to 130 (YSEVSGGSLRGEEDDIVEEESET). Residues 65 to 74 (RRDNRISHRT) are compositionally biased toward basic and acidic residues. Residues 119–129 (EEDDIVEEESE) show a composition bias toward acidic residues. Positions 182-219 (DSQDWTGCLLSQSRSRQPLVLGDNSFADLVKQWMDLPE) are inka box.

This sequence belongs to the INKA family.

Its subcellular location is the nucleus. Functionally, inhibitor of the serine/threonine-protein kinase pak4/pak5. Acts by binding pak4/pak5 in a substrate-like manner, inhibiting the protein kinase activity. The polypeptide is PAK4-inhibitor inka2 (Xenopus laevis (African clawed frog)).